The primary structure comprises 290 residues: 2-hydroxy-6-oxo-6-(2'-aminophenyl)hexa-2,4-dienoic acid hydrolase (290 aa).

Residues Ser114, Asp233, and His261 contribute to the active site.

This sequence belongs to the DmpD/TodF/XylF esterase family. As to quaternary structure, homodimer.

The enzyme catalyses (2E,4E)-6-(2-aminophenyl)-2-hydroxy-6-oxohexa-2,4-dienoate + H2O = (2E)-2-hydroxypenta-2,4-dienoate + anthranilate + H(+). It participates in xenobiotic degradation; carbazole degradation. Its function is as follows. Involved in the degradation of carbazole, a toxic N-heterocyclic aromatic compound containing dibenzopyrrole system. Catalyzes the hydrolytic cleavage of a carbon-carbon bond of 2-hydroxy-6-oxo-6-(2'-aminophenyl)hexa-2,4-dienoic acid (HOPDA) to yield anthranilate. CarC is specific for 2-hydroxy-6-oxo-6-phenylhexa-2,4-dienoic acid (6-phenyl-HODA), and has little activity toward 2-hydroxy-6-oxohepta-2,4-dienoic acid and 2-hydroxymuconic semialdehyde. The effect of the presence of an amino group or hydroxyl group at the 2'-position of phenyl moiety of 6-phenyl-HODA on the enzyme activity is found to be small. This chain is 2-hydroxy-6-oxo-6-(2'-aminophenyl)hexa-2,4-dienoic acid hydrolase (carC), found in Metapseudomonas resinovorans (Pseudomonas resinovorans).